A 255-amino-acid polypeptide reads, in one-letter code: MSPPRFSGRQDGRTDPTTALPRVLCLHGGGTNARIFRTQCRVIRAHLADSFRLVFADGPFPSGPGPDVTAVYGDWGPFRAWLPHPAVKDPDVDKIDECIAAAMAADDRAGATGAWVGLLGFSQGARVAASLLLRQQRHQQRQKASLGFAYGATNAISEYRFAVLFAGRGPLLDMGAGDDNTRPEAELLELPTIHVHGLQDPGLEMHRDLLRCCLGSSARLVQWDGDHRVPIRRKDVSAVAAEIRDLASRGILGDG.

Active-site charge relay system residues include Ser-122, Asp-200, and His-227.

This sequence belongs to the LovG family.

In terms of biological role, probable esterase; part of the cluster B that mediates the biosynthesis of azasperpyranones, members of the azaphilone family that exhibit anti-cancer activities. Azasperpyranones are synthesized by 2 clusters, A and B. Cluster A is responsible for the production of the polyhydric phenol moiety while the azaphilonoid scaffold is produced by the cluster B. The non-reducing polyketide synthase ATEG_03629 produces 5-methyl orsellinic acid, which is then reduced to 5-methyl orsellinic aldehyde by the NRPS-like protein ATEG_03630. 5-methyl orsellinic aldehyde is then first hydroxylated by the FAD-dependent monooxygenase ATEG_03635 and subsequently hydroxylated by the cytochrome P450 monooxygenase ATEG_03631 to produce the unstable polyhydric phenol precursor of azasperpyranones. On the other hand, the polyketide synthase ATEG_07659 is responsible for producing the 3,5-dimethyloctadienone moiety from acetyl-CoA, three malonyl-CoA, and two S-adenosyl methionines (SAM). The 3,5-dimethyloctadienone moiety is then loaded onto the SAT domain of ATEG_07661 and extended with four malonyl-CoA and one SAM, which leads to the formation of 2,4-dihydroxy-6-(5,7-dimethyl-2-oxo-trans-3-trans-5-nonadienyl)-3-methylbenzaldehyde (compound 8) after reductive release and aldol condensation. The FAD-dependent monooxygenase ATEG_07662 is the next enzyme in the biosynthesis sequence and hydroxylates the side chain at the benzylic position of compound 8. In Aspergillus nidulans, afoF, the ortholog of the FAD-dependent oxygenase ATEG_07660, is the key enzyme for the biosynthesis of asperfuranone by catalyzing the hydroxylation at C-8 of to prevent the formation of a six-membered ring hemiacetal intermediate and thus facilitating the formation of a five-membered ring to produce asperfuranone. In Aspergillus terreus, ATEG_07660 is probably not functional, which leads to the formation of the six-membered ring hemiacetal intermediate presperpyranone instead of asperfuranone. Finally, ATEG_03636 is involved in the condensation of the polyhydric phenol moiety produced by cluster A and the perasperpyranone precursor produced by cluster B, to yield azasperpyranone A. Further modifications of azasperpyranone A result in the production of derivatives, including azasperpyranone B to F. The sequence is that of Probable esterase ATEG_07663 from Aspergillus terreus (strain NIH 2624 / FGSC A1156).